The following is a 671-amino-acid chain: UvrABC system protein B (671 aa).

The 384-residue stretch at 31–414 folds into the Helicase ATP-binding domain; that stretch reads DGFEQGEKAQ…ELNQTDHKVE (384 aa). An ATP-binding site is contributed by 44 to 51; the sequence is GATGTGKT. The short motif at 97-120 is the Beta-hairpin element; the sequence is YYDYYQPEAYVPQSDTYIEKDSSI. Residues 435–601 enclose the Helicase C-terminal domain; sequence QIDDLVGEVN…TIVKPIRDVI (167 aa). In terms of domain architecture, UVR spans 630 to 665; the sequence is QNMIKTLTAQMQEAAKKLDFEEAANLRDAIMDLKKQ.

The protein belongs to the UvrB family. Forms a heterotetramer with UvrA during the search for lesions. Interacts with UvrC in an incision complex.

It is found in the cytoplasm. The UvrABC repair system catalyzes the recognition and processing of DNA lesions. A damage recognition complex composed of 2 UvrA and 2 UvrB subunits scans DNA for abnormalities. Upon binding of the UvrA(2)B(2) complex to a putative damaged site, the DNA wraps around one UvrB monomer. DNA wrap is dependent on ATP binding by UvrB and probably causes local melting of the DNA helix, facilitating insertion of UvrB beta-hairpin between the DNA strands. Then UvrB probes one DNA strand for the presence of a lesion. If a lesion is found the UvrA subunits dissociate and the UvrB-DNA preincision complex is formed. This complex is subsequently bound by UvrC and the second UvrB is released. If no lesion is found, the DNA wraps around the other UvrB subunit that will check the other stand for damage. This Lactobacillus johnsonii (strain CNCM I-12250 / La1 / NCC 533) protein is UvrABC system protein B.